A 500-amino-acid chain; its full sequence is MIDLKKFEVWFVTGSQHLYGPETLEKVAEHSREIAGGLDATPQMPVRVVFKPVLTTADAVHELCREANNAAHCIGLVTWMHTFSPAKMWIAGLKALQKPFLHLHTQYNRELPWATIDMDFMNLNQAAHGDREFGFIGSRMRLDRKVVVGFWQDLEVISELGTWARAAAGWHDAQHLKVARFGDNMRNVAVTEGDKVQAKIQLAYSVDGFGVGDLVARIHAASDRDVDHLVSEYEDTYTLSEPLTAKGKQRASLLDAARIELGLRHFLKDGNFHAFTDTFEDLHGLNQLPGIAVQRLMADGYGFGAEGDWKTAALVRTMKVMAAGLDAGTSFMEDYTYHLENGGLVLGAHMLEICPSIASGKPSCEIHPLSIGGKGDPVRLVFDSQTGPAVVATIVDVGERFRMVINKVNVIPPEVPLPKLPVARAVWIPEPNLAVAAACWIYAGGAHHTGFSLCLTAQHLQDYAEMAGIECVLIDNDTTVHACKNELRWNDAYYRLTGWR.

The Mn(2+) site is built by E306, E333, H349, and H448.

It belongs to the arabinose isomerase family. Mn(2+) is required as a cofactor.

The catalysed reaction is beta-L-arabinopyranose = L-ribulose. It participates in carbohydrate degradation; L-arabinose degradation via L-ribulose; D-xylulose 5-phosphate from L-arabinose (bacterial route): step 1/3. In terms of biological role, catalyzes the conversion of L-arabinose to L-ribulose. The protein is L-arabinose isomerase of Koribacter versatilis (strain Ellin345).